The following is a 249-amino-acid chain: Sugar fermentation stimulation protein homolog (249 aa).

The protein belongs to the SfsA family.

In Prochlorococcus marinus (strain MIT 9515), this protein is Sugar fermentation stimulation protein homolog.